A 311-amino-acid polypeptide reads, in one-letter code: Dehydrogenase/reductase SDR family member 7C (311 aa).

Residues 1 to 18 form the signal peptide; it reads MGVTAVLMLPLLLLGISG. The NAD(+) site is built by S47, L49, Y191, K195, and S226. Catalysis depends on Y191, which acts as the Proton acceptor.

This sequence belongs to the short-chain dehydrogenases/reductases (SDR) family.

The protein resides in the sarcoplasmic reticulum membrane. It carries out the reaction all-trans-retinol + NAD(+) = all-trans-retinal + NADH + H(+). NADH-dependent oxidoreductase which catalyzes the oxidation of all-trans-retinol to all-trans-retinal. Plays a role in the regulation of cardiac and skeletal muscle metabolic functions. Maintains Ca(2+) intracellular homeostasis by repressing Ca(2+) release from the sarcoplasmic reticulum (SR) in myotubes, possibly through local alternations in NAD/NADH or retinol/retinal. Also plays a role in Ca(2+) homeostasis by controlling Ca(2+) overload in the cytosol and the SR in myotubes. Involved in glucose uptake into skeletal muscles and muscle performance by activating PI3K and mTORC2-mediated AKT1 phosphorylation signaling pathways, possibly through the action of its downstream catalytic product all-trans-retinoic acid. The chain is Dehydrogenase/reductase SDR family member 7C (DHRS7C) from Bos taurus (Bovine).